A 394-amino-acid chain; its full sequence is Deoxyguanosinetriphosphate triphosphohydrolase-like protein (394 aa).

The tract at residues 1-36 (MSQAPYFVPRAPYAEDPSKSKGRRFKEDESRTRTPF) is disordered. Residues 25 to 36 (FKEDESRTRTPF) are compositionally biased toward basic and acidic residues. The 141-residue stretch at 70 to 210 (RLTHTLEVAQ…AALADDIAYN (141 aa)) folds into the HD domain.

It belongs to the dGTPase family. Type 2 subfamily.

The chain is Deoxyguanosinetriphosphate triphosphohydrolase-like protein from Caulobacter vibrioides (strain ATCC 19089 / CIP 103742 / CB 15) (Caulobacter crescentus).